We begin with the raw amino-acid sequence, 311 residues long: Ribonuclease HIII (311 aa).

Residues Met-95 to Lys-311 form the RNase H type-2 domain. A divalent metal cation contacts are provided by Asp-101, Glu-102, and Asp-206.

The protein belongs to the RNase HII family. RnhC subfamily. It depends on Mn(2+) as a cofactor. Requires Mg(2+) as cofactor.

It is found in the cytoplasm. It carries out the reaction Endonucleolytic cleavage to 5'-phosphomonoester.. Endonuclease that specifically degrades the RNA of RNA-DNA hybrids. This is Ribonuclease HIII from Bacillus cereus (strain AH187).